Consider the following 39-residue polypeptide: U1-ectatotoxin-Et1b subunit A (39 aa).

A disulfide bridge links Cys14 with Cys35.

The protein belongs to the ectatomin family. Ectatomin-Et subfamily. As to quaternary structure, heterodimer of subunits A and B; disulfide-linked. Expressed by the venom gland.

Its subcellular location is the secreted. The protein resides in the target cell membrane. In Ectatomma tuberculatum (Selva ant), this protein is U1-ectatotoxin-Et1b subunit A.